A 525-amino-acid polypeptide reads, in one-letter code: MSQQVIIFDTTLRDGEQALQASLSVKEKLQVAQALERMGVDVMEVGFPVSSPGDFESVQTIARQIKNSRVCGLARCVDRDIDVAAEALRVAEAFRIHLFLATSTLHVESKLKKSFDQVVEMAVHSVKRARNYTDDVEFSCEDAGRTPIDNLCRIVEATIKAGARTINIPDTVGYTTPNQFGGIISSLYQHVPNIDKAIISVHCHDDLGMAVGNSIAAIQSGARQVEGTLNGIGERAGNTALEEVIMAIKVRQDLLNVHTGIHHQEIYRTSQVVSQLCNMPIPANKAVVGANAFAHSSGIHQDGVLKNRQNYEIMTPEIIGLKEVQLNLTSRSGRAAVKHRMQEMGYQESNYSLDELYDAFLKLADKKGQVFDYDLEALAFINNQQEQSEHFRLEYFSVQSSSADIATASVKLAFGDEVHAEAATGNGPVDAVYEALNRITQLPIQLEKYQLTAKGHGRDALGQVDIVVEYEGRRFHGVGLATDIIESSALAMVNSMNTIWRARQVGIELRRLHQHNNSQDMQETV.

The Pyruvate carboxyltransferase domain occupies 5–267; it reads VIIFDTTLRD…HTGIHHQEIY (263 aa). Mn(2+) is bound by residues aspartate 14, histidine 202, histidine 204, and asparagine 238. The tract at residues 392-525 is regulatory domain; that stretch reads RLEYFSVQSS…NNSQDMQETV (134 aa).

Belongs to the alpha-IPM synthase/homocitrate synthase family. LeuA type 1 subfamily. In terms of assembly, homodimer. It depends on Mn(2+) as a cofactor.

It is found in the cytoplasm. The enzyme catalyses 3-methyl-2-oxobutanoate + acetyl-CoA + H2O = (2S)-2-isopropylmalate + CoA + H(+). Its pathway is amino-acid biosynthesis; L-leucine biosynthesis; L-leucine from 3-methyl-2-oxobutanoate: step 1/4. Catalyzes the condensation of the acetyl group of acetyl-CoA with 3-methyl-2-oxobutanoate (2-ketoisovalerate) to form 3-carboxy-3-hydroxy-4-methylpentanoate (2-isopropylmalate). This Sodalis glossinidius (strain morsitans) protein is 2-isopropylmalate synthase.